Reading from the N-terminus, the 320-residue chain is Aspartate carbamoyltransferase catalytic subunit (320 aa).

2 residues coordinate carbamoyl phosphate: arginine 58 and threonine 59. An L-aspartate-binding site is contributed by lysine 86. Arginine 108, histidine 136, and glutamine 139 together coordinate carbamoyl phosphate. Arginine 169 and arginine 223 together coordinate L-aspartate. Carbamoyl phosphate is bound by residues glycine 264 and proline 265.

The protein belongs to the aspartate/ornithine carbamoyltransferase superfamily. ATCase family. As to quaternary structure, heterododecamer (2C3:3R2) of six catalytic PyrB chains organized as two trimers (C3), and six regulatory PyrI chains organized as three dimers (R2).

It catalyses the reaction carbamoyl phosphate + L-aspartate = N-carbamoyl-L-aspartate + phosphate + H(+). It participates in pyrimidine metabolism; UMP biosynthesis via de novo pathway; (S)-dihydroorotate from bicarbonate: step 2/3. Functionally, catalyzes the condensation of carbamoyl phosphate and aspartate to form carbamoyl aspartate and inorganic phosphate, the committed step in the de novo pyrimidine nucleotide biosynthesis pathway. In Cereibacter sphaeroides (strain ATCC 17025 / ATH 2.4.3) (Rhodobacter sphaeroides), this protein is Aspartate carbamoyltransferase catalytic subunit.